The primary structure comprises 307 residues: Melanoma-associated antigen F1 (307 aa).

The disordered stretch occupies residues methionine 1–threonine 55. 2 stretches are compositionally biased toward basic and acidic residues: residues glutamate 16–threonine 27 and glutamate 35–glycine 48. The MAGE domain maps to leucine 76–leucine 277.

In terms of assembly, interacts (via MAGE domain) with RING-type zinc finger-containing E3 ubiquitin-protein ligases LNX1, TRIM27 and NSMCE1; the interaction is direct. As to expression, ubiquitous.

Functionally, enhances ubiquitin ligase activity of RING-type zinc finger-containing E3 ubiquitin ligases. Proposed to act through recruitment and/or stabilization of the E2 ubiquitin-conjugating enzyme at the E3:substrate complex. MAGEF1-NSMCE1 ubiquitin ligase complex promotes proteasomal degradation of MMS19, a key component of the cytosolic iron-sulfur protein assembly (CIA) machinery. Down-regulation of MMS19 impairs the activity of several DNA repair and metabolism enzymes such as ERCC2/XPD, FANCJ, RTEL1 and POLD1 that require iron-sulfur clusters as cofactors. May negatively regulate genome integrity by inhibiting homologous recombination-mediated double-strand break DNA repair. This Homo sapiens (Human) protein is Melanoma-associated antigen F1.